A 311-amino-acid chain; its full sequence is MRLVFMGTPDFAVPSLQALVAAGHEFAAVITQPDRPRGRGKKLLPPPVKSTALAAGLPVRQPSDMKDREFLEDLRLLQPELIVVVAFGRILSREILDLPARGCVNLHASLLPRYRGAAPIHRAVMNGEVETGVTTMWMAPQLDAGDIILQEKLPIPPEATTGEIHDRLAEVGAGLLVHTLELIAASRAPRLPQDEALATYAPPLKPEEEVIHWEQPAQVIYNQIRGLNPWPGAYTLRSGERLKIYGARLTDPSAIGRAGRVVEVGREGFVVQAGTGRLLVTSVQPPGKKIMPASAYLQGYPMVPGEILGCV.

Position 109-112 (serine 109–proline 112) interacts with (6S)-5,6,7,8-tetrahydrofolate.

This sequence belongs to the Fmt family.

The catalysed reaction is L-methionyl-tRNA(fMet) + (6R)-10-formyltetrahydrofolate = N-formyl-L-methionyl-tRNA(fMet) + (6S)-5,6,7,8-tetrahydrofolate + H(+). Attaches a formyl group to the free amino group of methionyl-tRNA(fMet). The formyl group appears to play a dual role in the initiator identity of N-formylmethionyl-tRNA by promoting its recognition by IF2 and preventing the misappropriation of this tRNA by the elongation apparatus. The sequence is that of Methionyl-tRNA formyltransferase from Moorella thermoacetica (strain ATCC 39073 / JCM 9320).